The sequence spans 92 residues: MEFLLKLEDLLRKRKEELPEKSYTAELFRDGVDRILKKIGEEAGEVIIAAKNPNEKELIHEIADLIFHLEVLMVEKGISLTTIAKELEKRHS.

This sequence belongs to the PRA-PH family.

The protein localises to the cytoplasm. It catalyses the reaction 1-(5-phospho-beta-D-ribosyl)-ATP + H2O = 1-(5-phospho-beta-D-ribosyl)-5'-AMP + diphosphate + H(+). The protein operates within amino-acid biosynthesis; L-histidine biosynthesis; L-histidine from 5-phospho-alpha-D-ribose 1-diphosphate: step 2/9. This chain is Phosphoribosyl-ATP pyrophosphatase, found in Leptospira biflexa serovar Patoc (strain Patoc 1 / ATCC 23582 / Paris).